The sequence spans 972 residues: Isoleucine--tRNA ligase (972 aa).

The 'HIGH' region signature appears at 63-73 (PYANGNIHIGH). L-isoleucyl-5'-AMP is bound at residue glutamate 603. Positions 644 to 648 (KMSKS) match the 'KMSKS' region motif. Residue lysine 647 coordinates ATP.

It belongs to the class-I aminoacyl-tRNA synthetase family. IleS type 1 subfamily. As to quaternary structure, monomer.

The protein localises to the cytoplasm. The enzyme catalyses tRNA(Ile) + L-isoleucine + ATP = L-isoleucyl-tRNA(Ile) + AMP + diphosphate. Its function is as follows. Catalyzes the attachment of isoleucine to tRNA(Ile). As IleRS can inadvertently accommodate and process structurally similar amino acids such as valine, to avoid such errors it has two additional distinct tRNA(Ile)-dependent editing activities. One activity is designated as 'pretransfer' editing and involves the hydrolysis of activated Val-AMP. The other activity is designated 'posttransfer' editing and involves deacylation of mischarged Val-tRNA(Ile). The chain is Isoleucine--tRNA ligase from Brucella abortus (strain 2308).